The following is a 576-amino-acid chain: Arginine--tRNA ligase (576 aa).

A 'HIGH' region motif is present at residues 126–136; the sequence is ANPTGPMHIGH.

It belongs to the class-I aminoacyl-tRNA synthetase family. Monomer.

Its subcellular location is the cytoplasm. It catalyses the reaction tRNA(Arg) + L-arginine + ATP = L-arginyl-tRNA(Arg) + AMP + diphosphate. This Rickettsia akari (strain Hartford) protein is Arginine--tRNA ligase.